Consider the following 338-residue polypeptide: RNA 3'-terminal phosphate cyclase (338 aa).

Residues Q103 and 283-287 (YLADQ) each bind ATP. H308 (tele-AMP-histidine intermediate) is an active-site residue.

This sequence belongs to the RNA 3'-terminal cyclase family. Type 1 subfamily.

The protein resides in the cytoplasm. The enzyme catalyses a 3'-end 3'-phospho-ribonucleotide-RNA + ATP = a 3'-end 2',3'-cyclophospho-ribonucleotide-RNA + AMP + diphosphate. Catalyzes the conversion of 3'-phosphate to a 2',3'-cyclic phosphodiester at the end of RNA. The mechanism of action of the enzyme occurs in 3 steps: (A) adenylation of the enzyme by ATP; (B) transfer of adenylate to an RNA-N3'P to produce RNA-N3'PP5'A; (C) and attack of the adjacent 2'-hydroxyl on the 3'-phosphorus in the diester linkage to produce the cyclic end product. The biological role of this enzyme is unknown but it is likely to function in some aspects of cellular RNA processing. The sequence is that of RNA 3'-terminal phosphate cyclase from Escherichia coli (strain SMS-3-5 / SECEC).